Reading from the N-terminus, the 408-residue chain is LL-diaminopimelate aminotransferase (408 aa).

Substrate contacts are provided by Tyr15 and Gly42. Pyridoxal 5'-phosphate-binding positions include Tyr72, 108-109 (SK), Tyr132, Asn187, Tyr218, and 246-248 (SFS). 3 residues coordinate substrate: Lys109, Tyr132, and Asn187. Residue Lys249 is modified to N6-(pyridoxal phosphate)lysine. Positions 257 and 292 each coordinate pyridoxal 5'-phosphate. Substrate is bound by residues Asn292 and Arg388.

It belongs to the class-I pyridoxal-phosphate-dependent aminotransferase family. LL-diaminopimelate aminotransferase subfamily. Homodimer. Requires pyridoxal 5'-phosphate as cofactor.

The enzyme catalyses (2S,6S)-2,6-diaminopimelate + 2-oxoglutarate = (S)-2,3,4,5-tetrahydrodipicolinate + L-glutamate + H2O + H(+). The protein operates within amino-acid biosynthesis; L-lysine biosynthesis via DAP pathway; LL-2,6-diaminopimelate from (S)-tetrahydrodipicolinate (aminotransferase route): step 1/1. Involved in the synthesis of meso-diaminopimelate (m-DAP or DL-DAP), required for both lysine and peptidoglycan biosynthesis. Catalyzes the direct conversion of tetrahydrodipicolinate to LL-diaminopimelate. In Prochlorococcus marinus subsp. pastoris (strain CCMP1986 / NIES-2087 / MED4), this protein is LL-diaminopimelate aminotransferase.